Consider the following 337-residue polypeptide: Ferredoxin--NADP reductase (337 aa).

FAD-binding residues include D35, Q43, Y48, V88, F123, D289, and T330.

Belongs to the ferredoxin--NADP reductase type 2 family. In terms of assembly, homodimer. Requires FAD as cofactor.

It catalyses the reaction 2 reduced [2Fe-2S]-[ferredoxin] + NADP(+) + H(+) = 2 oxidized [2Fe-2S]-[ferredoxin] + NADPH. The sequence is that of Ferredoxin--NADP reductase from Paramagnetospirillum magneticum (strain ATCC 700264 / AMB-1) (Magnetospirillum magneticum).